A 228-amino-acid chain; its full sequence is MQSMILFAAALMGAAVNGFVLPRTDDPDCETKATDCGSTSNIKYTVVKGDTLTSIAKKFKSGICNIVSVNKLANPNLIELGATLIIPENCSNPDNKSCVSTPAEPTETCVPGLPGSYTIVSGDTLTNISQDFNITLDSLIAANTQIENPDAIDVGQIITVPVCPSSQCEAVGTYNIVAGDLFVDLAATYHTTIGQIKALNNNVNPSKLKVGQQIILPQDCKNVTTAVA.

The first 18 residues, 1–18, serve as a signal peptide directing secretion; that stretch reads MQSMILFAAALMGAAVNG. Intrachain disulfides connect Cys36–Cys90, Cys64–Cys98, Cys109–Cys163, and Cys168–Cys220. Residues 42–86 form the LysM 1 domain; sequence IKYTVVKGDTLTSIAKKFKSGICNIVSVNKLANPNLIELGATLII. Residues Thr51, Thr53, Asn76, and Ile78 each contribute to the chitin site. Asn89, Asn95, Asn127, and Asn133 each carry an N-linked (GlcNAc...) asparagine glycan. 2 LysM domains span residues 115 to 160 and 172 to 216; these read GSYT…IITV and GTYN…QIIL. The chitin site is built by Gly179, Leu181, Val183, Pro205, Ser206, and Leu208. Residue Asn222 is glycosylated (N-linked (GlcNAc...) asparagine).

The protein belongs to the secreted LysM effector family. As to quaternary structure, forms homodimers.

It is found in the secreted. Secreted effector that enables the plant pathogenic fungus to manipulate host defenses for successful infection. Binds chitine, but not to any other glycan, including the N-linked glycan chitobiose. Outcompetes host immune receptor for chitin binding through intrachain LysM dimerization. During infection, sequesters chitin oligosaccharides that are released from the cell walls of invading hyphae to prevent elicitation of host immunity. The polypeptide is Secreted LysM effector ECP6 (Passalora fulva (Tomato leaf mold)).